The primary structure comprises 332 residues: MPPTVDMGIPGASSSVAVNPTRKRVLLAEPRGYCAGVDRAVETVERALEKHGPPVYVRHEIVHNRHVVSTLEKAGAVFVEETDEVPEGAIVVFSAHGVAPTVHAAAAERNLHTIDATCPLVTKVHNEARRFARNDYDILLIGHEGHEEVVGTAGEAPDHVQLVDGVAAVDNVRVRDEDKVVWLSQTTLSVDETMEIVERLRQRFPKLQDPPSDDICYATQNRQVAVKAMAPECDLVIVVGSRNSSNSVRLVEVALGGGAGAAHLVDWADDIDPAWLEGVTTVGVTSGASVPEVLVQGVLERLAECGFDVVQPVTTAQETLVFALPREIRSAR.

[4Fe-4S] cluster is bound at residue Cys34. (2E)-4-hydroxy-3-methylbut-2-enyl diphosphate-binding residues include His63 and His96. The dimethylallyl diphosphate site is built by His63 and His96. Isopentenyl diphosphate is bound by residues His63 and His96. [4Fe-4S] cluster is bound at residue Cys118. His146 lines the (2E)-4-hydroxy-3-methylbut-2-enyl diphosphate pocket. His146 contacts dimethylallyl diphosphate. Residue His146 coordinates isopentenyl diphosphate. The Proton donor role is filled by Glu148. Thr186 contributes to the (2E)-4-hydroxy-3-methylbut-2-enyl diphosphate binding site. Cys216 lines the [4Fe-4S] cluster pocket. Residues Ser244, Ser245, Asn246, and Ser289 each coordinate (2E)-4-hydroxy-3-methylbut-2-enyl diphosphate. Residues Ser244, Ser245, Asn246, and Ser289 each contribute to the dimethylallyl diphosphate site. Residues Ser244, Ser245, Asn246, and Ser289 each contribute to the isopentenyl diphosphate site.

The protein belongs to the IspH family. It depends on [4Fe-4S] cluster as a cofactor.

It carries out the reaction isopentenyl diphosphate + 2 oxidized [2Fe-2S]-[ferredoxin] + H2O = (2E)-4-hydroxy-3-methylbut-2-enyl diphosphate + 2 reduced [2Fe-2S]-[ferredoxin] + 2 H(+). The catalysed reaction is dimethylallyl diphosphate + 2 oxidized [2Fe-2S]-[ferredoxin] + H2O = (2E)-4-hydroxy-3-methylbut-2-enyl diphosphate + 2 reduced [2Fe-2S]-[ferredoxin] + 2 H(+). It functions in the pathway isoprenoid biosynthesis; dimethylallyl diphosphate biosynthesis; dimethylallyl diphosphate from (2E)-4-hydroxy-3-methylbutenyl diphosphate: step 1/1. It participates in isoprenoid biosynthesis; isopentenyl diphosphate biosynthesis via DXP pathway; isopentenyl diphosphate from 1-deoxy-D-xylulose 5-phosphate: step 6/6. In terms of biological role, catalyzes the conversion of 1-hydroxy-2-methyl-2-(E)-butenyl 4-diphosphate (HMBPP) into a mixture of isopentenyl diphosphate (IPP) and dimethylallyl diphosphate (DMAPP). Acts in the terminal step of the DOXP/MEP pathway for isoprenoid precursor biosynthesis. This chain is 4-hydroxy-3-methylbut-2-enyl diphosphate reductase, found in Mycolicibacterium paratuberculosis (strain ATCC BAA-968 / K-10) (Mycobacterium paratuberculosis).